We begin with the raw amino-acid sequence, 170 residues long: F107 fimbrial protein (170 aa).

Positions 1–21 (MKRLVFISFVALSMTAGSAMA) are cleaved as a signal peptide. The cysteines at positions 37 and 78 are disulfide-linked.

It belongs to the fimbrial protein family.

The protein resides in the fimbrium. In terms of biological role, fimbriae (also called pili), polar filaments radiating from the surface of the bacterium to a length of 0.5-1.5 micrometers and numbering 100-300 per cell, enable bacteria to colonize the epithelium of specific host organs. The protein is F107 fimbrial protein (fedA) of Escherichia coli.